We begin with the raw amino-acid sequence, 328 residues long: Phenylalanine--tRNA ligase alpha subunit (328 aa).

Glutamate 253 contributes to the Mg(2+) binding site.

This sequence belongs to the class-II aminoacyl-tRNA synthetase family. Phe-tRNA synthetase alpha subunit type 1 subfamily. In terms of assembly, tetramer of two alpha and two beta subunits. Mg(2+) serves as cofactor.

The protein localises to the cytoplasm. It catalyses the reaction tRNA(Phe) + L-phenylalanine + ATP = L-phenylalanyl-tRNA(Phe) + AMP + diphosphate + H(+). This Actinobacillus pleuropneumoniae serotype 7 (strain AP76) protein is Phenylalanine--tRNA ligase alpha subunit.